We begin with the raw amino-acid sequence, 121 residues long: Protein CHLORORESPIRATORY REDUCTION 42, chloroplastic (121 aa).

Biogenesis factor component of the plastidial NDH subcomplex A.

The protein localises to the plastid. The protein resides in the chloroplast. It localises to the chloroplast stroma. Required for both formation and activity of the chloroplast NAD(P)H dehydrogenase (NDH) complex of the photosynthetic electron transport chain. Functions in assembly or stabilization of the NDH complex; probably involved, together with CRR1 and CRR6, in the incorporation of NdhJ, NdhM, NdhK and NdhI into the NDH subcomplex A assembly intermediate (NAI500) to produce the complex NAI400. The chain is Protein CHLORORESPIRATORY REDUCTION 42, chloroplastic from Arabidopsis thaliana (Mouse-ear cress).